Here is an 80-residue protein sequence, read N- to C-terminus: MSDDTFSRIQSIVEEQLGVESSKIKLETDFQKDLGADSLDVVELIMAFEEEFDINVNDDAAGDIKTVQQVLEYIEAESAK.

The region spanning 3 to 78 (DDTFSRIQSI…QVLEYIEAES (76 aa)) is the Carrier domain. Ser38 carries the post-translational modification O-(pantetheine 4'-phosphoryl)serine.

This sequence belongs to the acyl carrier protein (ACP) family. Post-translationally, 4'-phosphopantetheine is transferred from CoA to a specific serine of apo-ACP by AcpS. This modification is essential for activity because fatty acids are bound in thioester linkage to the sulfhydryl of the prosthetic group.

It is found in the plastid. Its subcellular location is the chloroplast. It participates in lipid metabolism; fatty acid biosynthesis. Functionally, carrier of the growing fatty acid chain in fatty acid biosynthesis. The protein is Acyl carrier protein of Trieres chinensis (Marine centric diatom).